The primary structure comprises 133 residues: Transmembrane protein 60 (133 aa).

The next 4 helical transmembrane spans lie at 5-25, 35-55, 78-98, and 110-130; these read LAQR…MLVL, WFLI…LLIV, AWYL…CAKL, and FIPL…NVFF.

The protein resides in the membrane. The protein is Transmembrane protein 60 (TMEM60) of Homo sapiens (Human).